The primary structure comprises 347 residues: Glucose 1-dehydrogenase (347 aa).

Residue Cys-39 participates in Zn(2+) binding. Thr-41 lines the substrate pocket. The Zn(2+) site is built by His-64 and Glu-65. Substrate-binding residues include Glu-110 and Glu-146. Glu-146 serves as a coordination point for Zn(2+). NADP(+) is bound by residues 178-181, 260-262, and 289-291; these read AGPV, LGV, and SVN. Residue Asn-291 coordinates substrate.

It belongs to the zinc-containing alcohol dehydrogenase family. Glucose 1-dehydrogenase subfamily. Homodimer. It depends on Zn(2+) as a cofactor.

It carries out the reaction D-glucose + NAD(+) = D-glucono-1,5-lactone + NADH + H(+). The enzyme catalyses D-glucose + NADP(+) = D-glucono-1,5-lactone + NADPH + H(+). Its function is as follows. Catalyzes the NAD(P)(+)-dependent oxidation of D-glucose to D-gluconate via gluconolactone. To a lesser extent, is also active with xylose as substrate, but mannose, arabinose, galactose, fructose 6-phosphate, glucose 6-phosphate, glycerinaldehyde 3-phosphate, ribose, sorbitol, ethanol, erythritol, or lactose are not oxidized by the enzyme. Can utilize both NAD(+) and NADP(+) as electron acceptor, with a marked preference for NADP(+). Is involved in the degradation of glucose through a non-phosphorylative variant of the Entner-Doudoroff pathway. This chain is Glucose 1-dehydrogenase (gdh), found in Thermoproteus tenax (strain ATCC 35583 / DSM 2078 / JCM 9277 / NBRC 100435 / Kra 1).